A 322-amino-acid polypeptide reads, in one-letter code: Elongation factor Ts, mitochondrial (322 aa).

Belongs to the EF-Ts family.

Its subcellular location is the mitochondrion. Functionally, associates with the EF-Tu.GDP complex and induces the exchange of GDP to GTP. It remains bound to the aminoacyl-tRNA.EF-Tu.GTP complex up to the GTP hydrolysis stage on the ribosome. This is Elongation factor Ts, mitochondrial from Chlamydomonas reinhardtii (Chlamydomonas smithii).